The chain runs to 277 residues: MASAELDYTIEIPDQPCWSQKNSPSPGGKEAETRQPVVILLGWGGCKDKNLAKYSAIYHKRGCIVIRYTAPWHMVFFSESLGIPSLRVLAQKLLELLFDYEIEKEPLLFHVFSNGGVMLYRYVLELLQTRRFCRLRVVGTIFDSAPGDSNLVGALRALAAILERRAAMLRLLLLVAFALVVVLFHVLLAPITALFHTHFYDRLQDAGSRWPELYLYSRADEVVLARDIERMVEARLARRVLARSVDFVSSAHVSHLRDYPTYYTSLCVDFMRNCVRC.

A helical transmembrane segment spans residues 171–191 (LLLLVAFALVVVLFHVLLAPI).

It belongs to the TMEM53 family. Widely expressed.

It is found in the nucleus outer membrane. In terms of biological role, ensures normal bone formation, through the negative regulation of bone morphogenetic protein (BMP) signaling in osteoblast lineage cells by blocking cytoplasm-nucleus translocation of phosphorylated SMAD1/5/9 proteins. This Homo sapiens (Human) protein is Transmembrane protein 53 (TMEM53).